The chain runs to 166 residues: Shikimate kinase (166 aa).

11–16 (GSGKST) is a binding site for ATP. Position 15 (Ser-15) interacts with Mg(2+). Substrate is bound by residues Asp-33, Arg-57, and Gly-79. Arg-117 is a binding site for ATP. Position 134 (Arg-134) interacts with substrate.

Belongs to the shikimate kinase family. In terms of assembly, monomer. Mg(2+) is required as a cofactor.

It localises to the cytoplasm. The catalysed reaction is shikimate + ATP = 3-phosphoshikimate + ADP + H(+). It functions in the pathway metabolic intermediate biosynthesis; chorismate biosynthesis; chorismate from D-erythrose 4-phosphate and phosphoenolpyruvate: step 5/7. Its function is as follows. Catalyzes the specific phosphorylation of the 3-hydroxyl group of shikimic acid using ATP as a cosubstrate. The protein is Shikimate kinase of Sulfurihydrogenibium sp. (strain YO3AOP1).